The following is a 336-amino-acid chain: Galactose/methyl galactoside import permease protein MglC (336 aa).

A run of 9 helical transmembrane segments spans residues 17-37 (GIYV…PTFL), 53-73 (IIIA…LSAG), 107-127 (LVIL…GIII), 128-148 (AYLN…VYGI), 181-201 (FRLS…WVLW), 227-247 (VALN…FGGL), 257-277 (TNNL…VGGV), 279-299 (FSGG…FTVI), and 306-326 (IGVN…FAVA).

This sequence belongs to the binding-protein-dependent transport system permease family. AraH/RbsC subfamily. In terms of assembly, the complex is composed of one ATP-binding protein (MglA), two transmembrane proteins (MglC) and a solute-binding protein (MglB).

It is found in the cell inner membrane. In terms of biological role, part of the ABC transporter complex MglABC involved in galactose/methyl galactoside import. Probably responsible for the translocation of the substrate across the membrane. The chain is Galactose/methyl galactoside import permease protein MglC (mglC) from Salmonella typhimurium (strain LT2 / SGSC1412 / ATCC 700720).